Consider the following 318-residue polypeptide: Ribonuclease Z (318 aa).

Residues H62, H64, D66, H67, H144, D215, and H273 each contribute to the Zn(2+) site. D66 acts as the Proton acceptor in catalysis.

Belongs to the RNase Z family. Homodimer. Zn(2+) serves as cofactor.

The catalysed reaction is Endonucleolytic cleavage of RNA, removing extra 3' nucleotides from tRNA precursor, generating 3' termini of tRNAs. A 3'-hydroxy group is left at the tRNA terminus and a 5'-phosphoryl group is left at the trailer molecule.. In terms of biological role, zinc phosphodiesterase, which displays some tRNA 3'-processing endonuclease activity. Probably involved in tRNA maturation, by removing a 3'-trailer from precursor tRNA. The sequence is that of Ribonuclease Z from Prochlorococcus marinus (strain MIT 9313).